The chain runs to 504 residues: ATP synthase subunit beta (504 aa).

Position 181 to 188 (181 to 188 (GGAGVGKT)) interacts with ATP.

Belongs to the ATPase alpha/beta chains family. In terms of assembly, F-type ATPases have 2 components, CF(1) - the catalytic core - and CF(0) - the membrane proton channel. CF(1) has five subunits: alpha(3), beta(3), gamma(1), delta(1), epsilon(1). CF(0) has three main subunits: a(1), b(2) and c(9-12). The alpha and beta chains form an alternating ring which encloses part of the gamma chain. CF(1) is attached to CF(0) by a central stalk formed by the gamma and epsilon chains, while a peripheral stalk is formed by the delta and b chains.

The protein resides in the cell inner membrane. It catalyses the reaction ATP + H2O + 4 H(+)(in) = ADP + phosphate + 5 H(+)(out). In terms of biological role, produces ATP from ADP in the presence of a proton gradient across the membrane. The catalytic sites are hosted primarily by the beta subunits. The polypeptide is ATP synthase subunit beta (Ehrlichia ruminantium (strain Gardel)).